Here is a 257-residue protein sequence, read N- to C-terminus: MPKIGIIGGSGVYGVFEPKEVVKIHTPYGRPSAPVEIGEIEGVEVAFIPRHGKYHEFPPHEVPYRANIWALYELGVERIIAINAVGSLKEEYKPGDIVIIDQFIDFTKKREYTFYNGPKVAHVSMADPFCPELRRIFIETAKELGLPVHEKGTYICIEGPRFSTRAESRMFRQFADVIGMTLVPEVNLARELGMCYVNISTVTDYDVWAEKPVNAQEVLRVMKENEEKVQKLLRKAIPKIPEERKCGCADVLKTMFV.

Phosphate-binding positions include serine 10 and arginine 50 to histidine 51. A substrate-binding site is contributed by methionine 180. Threonine 181 serves as a coordination point for phosphate. Aspartate 204–aspartate 206 contacts substrate.

Belongs to the PNP/MTAP phosphorylase family. MTAP subfamily. Homohexamer. Dimer of a homotrimer.

The catalysed reaction is S-methyl-5'-thioadenosine + phosphate = 5-(methylsulfanyl)-alpha-D-ribose 1-phosphate + adenine. The protein operates within amino-acid biosynthesis; L-methionine biosynthesis via salvage pathway; S-methyl-5-thio-alpha-D-ribose 1-phosphate from S-methyl-5'-thioadenosine (phosphorylase route): step 1/1. In terms of biological role, catalyzes the reversible phosphorylation of S-methyl-5'-thioadenosine (MTA) to adenine and 5-methylthioribose-1-phosphate. Involved in the breakdown of MTA, a major by-product of polyamine biosynthesis. Responsible for the first step in the methionine salvage pathway after MTA has been generated from S-adenosylmethionine. Has broad substrate specificity with 6-aminopurine nucleosides as preferred substrates. This chain is S-methyl-5'-thioadenosine phosphorylase (mntP), found in Pyrococcus abyssi (strain GE5 / Orsay).